Consider the following 653-residue polypeptide: Multidomain regulatory protein Rv1364c (653 aa).

Thr54 and Thr81 each carry phosphothreonine; by PknD. One can recognise a PAC domain in the interval 86–142 (SGSEWRLQTDYDGSGVEERYFDFVVTPRRRADGSIEGVQLIVDDVTSRVRARQAAEA). The region spanning 177 to 396 (DIAAEYLVAA…DDVTLLAMQR (220 aa)) is the PPM-type phosphatase domain. Residues Asp211 and Val212 each coordinate Mn(2+). The residue at position 299 (Thr299) is a Phosphothreonine; by PknD. Residues Asp328 and Asp387 each contribute to the Mn(2+) site. Phosphothreonine; by PknD is present on Thr390. The tract at residues 397–544 (RAPTPPLHIT…TMVRRAAFQQ (148 aa)) is anti-sigma factor kinase region. Ser506 is subject to Phosphoserine; by PknD. Residues Thr520 and Thr568 each carry the phosphothreonine; by PknD modification. The 108-residue stretch at 546–653 (IDSEFVSLVE…ADTEDIFAQE (108 aa)) folds into the STAS domain. Ser600 bears the Phosphoserine; by autocatalysis mark.

In terms of assembly, exists in solution as both monomer and dimer. Both the phosphorylated and unphosphorylated proteins form extended dimers. Interacts with SigF. Can efficiently bind to SigF independently of its autophosphorylation. Interaction between SigF and Rv1364c is reduced significantly upon the phosphorylation of both proteins by PknD. It depends on Mn(2+) as a cofactor. The cofactor is Mg(2+). In terms of processing, autophosphorylated. Phosphorylated by PknD on multiple threonine and serine residues. Phosphorylation is antagonized by the phosphatase activity.

The catalysed reaction is O-phospho-L-seryl-[protein] + H2O = L-seryl-[protein] + phosphate. It catalyses the reaction O-phospho-L-threonyl-[protein] + H2O = L-threonyl-[protein] + phosphate. It carries out the reaction L-seryl-[protein] + ATP = O-phospho-L-seryl-[protein] + ADP + H(+). The enzyme catalyses L-threonyl-[protein] + ATP = O-phospho-L-threonyl-[protein] + ADP + H(+). With respect to regulation, the phosphatase domain is activated by the anti-sigma factor kinase domain. Its function is as follows. Primarily acts as an independent SigF regulator that is sensitive to the osmosensory signal, mediating the cross talk of PknD with the SigF regulon. Possesses both phosphatase and kinase activities. The kinase domain functions as a classic anti-sigma factor-like kinase to phosphorylate the anti-anti-sigma factor domain at the canonical regulatory site, and the phosphatase domain antagonizes this activity. The chain is Multidomain regulatory protein Rv1364c from Mycobacterium tuberculosis (strain ATCC 25618 / H37Rv).